The primary structure comprises 381 residues: L-lactate dehydrogenase (381 aa).

One can recognise an FMN hydroxy acid dehydrogenase domain in the interval 1-380 (MIISASTDYR…SADSLVRELG (380 aa)). Residue Y24 coordinates substrate. FMN is bound by residues S106 and Q127. Y129 is a substrate binding site. T155 is an FMN binding site. R164 contacts substrate. K251 is a binding site for FMN. H275 (proton acceptor) is an active-site residue. Substrate is bound at residue R278. FMN is bound at residue 306-330 (DSGIRTGLDVVRMIALGADSVLLGR).

Belongs to the FMN-dependent alpha-hydroxy acid dehydrogenase family. Homotetramer. The cofactor is FMN.

The protein resides in the cell inner membrane. The enzyme catalyses (S)-lactate + A = pyruvate + AH2. In terms of biological role, catalyzes the conversion of L-lactate to pyruvate. Is coupled to the respiratory chain. This chain is L-lactate dehydrogenase, found in Pseudomonas aeruginosa (strain UCBPP-PA14).